The following is a 495-amino-acid chain: Leucine aminopeptidase 2 (495 aa).

The signal sequence occupies residues 1–21; it reads MKSQLLSLAVAVSTISQGVVG. A PA domain is found at 124-218; sequence PPANKIMAEL…EDGKNLASLV (95 aa). Residues Asn-142 and Asn-235 are each glycosylated (N-linked (GlcNAc...) asparagine). Positions 259 and 271 each coordinate Zn(2+). Asn-272 carries N-linked (GlcNAc...) asparagine glycosylation. Glu-303 functions as the Proton acceptor in the catalytic mechanism. Residues Glu-304 and Asp-332 each contribute to the Zn(2+) site. N-linked (GlcNAc...) asparagine glycosylation is present at Asn-352. Position 430 (His-430) interacts with Zn(2+).

The protein belongs to the peptidase M28 family. M28A subfamily. In terms of assembly, monomer. Zn(2+) is required as a cofactor.

The protein localises to the secreted. Extracellular aminopeptidase that releases a wide variety of amino acids from natural peptides and contributes to pathogenicity. This Trichophyton tonsurans (Scalp ringworm fungus) protein is Leucine aminopeptidase 2 (LAP2).